The following is a 194-amino-acid chain: ATP synthase subunit delta (194 aa).

The protein belongs to the ATPase delta chain family. In terms of assembly, F-type ATPases have 2 components, F(1) - the catalytic core - and F(0) - the membrane proton channel. F(1) has five subunits: alpha(3), beta(3), gamma(1), delta(1), epsilon(1). F(0) has three main subunits: a(1), b(2) and c(10-14). The alpha and beta chains form an alternating ring which encloses part of the gamma chain. F(1) is attached to F(0) by a central stalk formed by the gamma and epsilon chains, while a peripheral stalk is formed by the delta and b chains.

Its subcellular location is the cell inner membrane. F(1)F(0) ATP synthase produces ATP from ADP in the presence of a proton or sodium gradient. F-type ATPases consist of two structural domains, F(1) containing the extramembraneous catalytic core and F(0) containing the membrane proton channel, linked together by a central stalk and a peripheral stalk. During catalysis, ATP synthesis in the catalytic domain of F(1) is coupled via a rotary mechanism of the central stalk subunits to proton translocation. Its function is as follows. This protein is part of the stalk that links CF(0) to CF(1). It either transmits conformational changes from CF(0) to CF(1) or is implicated in proton conduction. The polypeptide is ATP synthase subunit delta (Bartonella quintana (strain Toulouse) (Rochalimaea quintana)).